The following is a 100-amino-acid chain: Small ribosomal subunit protein uS14 (100 aa).

The protein belongs to the universal ribosomal protein uS14 family. Part of the 30S ribosomal subunit. Contacts proteins S3 and S10.

Its function is as follows. Binds 16S rRNA, required for the assembly of 30S particles and may also be responsible for determining the conformation of the 16S rRNA at the A site. This chain is Small ribosomal subunit protein uS14, found in Prochlorococcus marinus (strain MIT 9211).